Consider the following 418-residue polypeptide: NADH-quinone oxidoreductase subunit D (418 aa).

This sequence belongs to the complex I 49 kDa subunit family. As to quaternary structure, NDH-1 is composed of 14 different subunits. Subunits NuoB, C, D, E, F, and G constitute the peripheral sector of the complex.

The protein resides in the cell inner membrane. It carries out the reaction a quinone + NADH + 5 H(+)(in) = a quinol + NAD(+) + 4 H(+)(out). In terms of biological role, NDH-1 shuttles electrons from NADH, via FMN and iron-sulfur (Fe-S) centers, to quinones in the respiratory chain. The immediate electron acceptor for the enzyme in this species is believed to be ubiquinone. Couples the redox reaction to proton translocation (for every two electrons transferred, four hydrogen ions are translocated across the cytoplasmic membrane), and thus conserves the redox energy in a proton gradient. This chain is NADH-quinone oxidoreductase subunit D, found in Bordetella pertussis (strain Tohama I / ATCC BAA-589 / NCTC 13251).